The chain runs to 740 residues: Protein SMY2 (740 aa).

Serine 12 and serine 96 each carry phosphoserine. Threonine 129 is subject to Phosphothreonine. Residues 205–261 (ESSWRYIDTQGQIHGPFTTQMMSQWYIGGYFASTLQISRLGSTPETLGINDIFITLG) form the GYF domain. A Phosphothreonine modification is found at threonine 311. 3 disordered regions span residues 346–510 (ISQT…KEEL), 523–548 (PSNQ…SPLK), and 567–592 (QSSS…VTSK). Over residues 364-439 (EKGKKEKSES…KKSEKTKKDT (76 aa)) the composition is skewed to basic and acidic residues. A coiled-coil region spans residues 369-440 (EKSESVAKAL…KSEKTKKDTQ (72 aa)). Over residues 452-467 (LPSLNSSSANPAPWAS) the composition is skewed to low complexity. The span at 474–486 (AIETSIKNGVSST) shows a compositional bias: polar residues. Residues 500-510 (NSKEEKQKEEL) are compositionally biased toward basic and acidic residues. A compositionally biased stretch (polar residues) spans 523 to 536 (PSNQTIDIKSQFQK). Position 545 is a phosphoserine (serine 545). Serine 602 bears the Phosphoserine mark.

The protein belongs to the SMY2/mpd2 family. As to quaternary structure, interacts with EAP1 and MSL5 (via the GYP domain).

Its subcellular location is the cytoplasm. Functionally, suppressor of the MYO2 gene. The polypeptide is Protein SMY2 (SMY2) (Saccharomyces cerevisiae (strain ATCC 204508 / S288c) (Baker's yeast)).